Here is a 336-residue protein sequence, read N- to C-terminus: tRNA(Ile)-lysidine synthase (336 aa).

21–26 is an ATP binding site; sequence SGGLDS.

Belongs to the tRNA(Ile)-lysidine synthase family.

It localises to the cytoplasm. It carries out the reaction cytidine(34) in tRNA(Ile2) + L-lysine + ATP = lysidine(34) in tRNA(Ile2) + AMP + diphosphate + H(+). In terms of biological role, ligates lysine onto the cytidine present at position 34 of the AUA codon-specific tRNA(Ile) that contains the anticodon CAU, in an ATP-dependent manner. Cytidine is converted to lysidine, thus changing the amino acid specificity of the tRNA from methionine to isoleucine. The sequence is that of tRNA(Ile)-lysidine synthase from Helicobacter pylori (strain ATCC 700392 / 26695) (Campylobacter pylori).